A 393-amino-acid chain; its full sequence is G protein-activated inward rectifier potassium channel 3 (393 aa).

Residues 1 to 23 are disordered; sequence MAQENAAFSPGSEEPPRRRGRQR. Residues 1–57 are Cytoplasmic-facing; sequence MAQENAAFSPGSEEPPRRRGRQRYVEKDGRCNVQQGNVRETYRYLTDLFTTLVDLQW. Residues 58-82 form a helical membrane-spanning segment; sequence RLSLLFFVLAYALTWLFFGAIWWLI. Residues 83 to 106 lie on the Extracellular side of the membrane; it reads AYGRGDLEHLEDTAWTPCVNNLNG. Residues 107-118 constitute an intramembrane region (helical; Pore-forming); the sequence is FVAAFLFSIETE. The pore-forming intramembrane region spans 119–125; it reads TTIGYGH. Positions 120-125 match the Selectivity filter motif; it reads TIGYGH. At 126-134 the chain is on the extracellular side; the sequence is RVITDQCPE. The helical transmembrane segment at 135–156 threads the bilayer; sequence GIVLLLLQAILGSMVNAFMVGC. Topologically, residues 157–393 are cytoplasmic; it reads MFVKISQPNK…LPPPESESKV (237 aa). The segment at 360–393 is disordered; sequence KVEEEGAGEGAGAGDGADKEQNGCLPPPESESKV. The span at 384–393 shows a compositional bias: pro residues; the sequence is LPPPESESKV. A PDZ-binding motif is present at residues 390–393; the sequence is ESKV.

Belongs to the inward rectifier-type potassium channel (TC 1.A.2.1) family. KCNJ9 subfamily. Associates with KCNJ3/GIRK1 to form a G-protein-activated heteromultimer pore-forming unit. Interacts (via PDZ-binding motif) with SNX27 (via PDZ domain); the interaction is required when endocytosed to prevent degradation in lysosomes and promote recycling to the plasma membrane.

It is found in the membrane. It catalyses the reaction K(+)(in) = K(+)(out). Functionally, this receptor is controlled by G proteins. Inward rectifier potassium channels are characterized by a greater tendency to allow potassium to flow into the cell rather than out of it. Their voltage dependence is regulated by the concentration of extracellular potassium; as external potassium is raised, the voltage range of the channel opening shifts to more positive voltages. The inward rectification is mainly due to the blockage of outward current by internal magnesium. Unable to produce channel activity when expressed alone but forms a functional channel in association with KCNJ3/GIRK1. The protein is G protein-activated inward rectifier potassium channel 3 (Kcnj9) of Rattus norvegicus (Rat).